The chain runs to 164 residues: C-phycoerythrin alpha chain (164 aa).

(2R,3E)-phycoerythrobilin is bound by residues Cys-82 and Cys-139.

Belongs to the phycobiliprotein family. In terms of assembly, heterodimer of an alpha and a beta chain. Post-translationally, contains two covalently linked bilin chromophores.

It is found in the cellular thylakoid membrane. In terms of biological role, light-harvesting photosynthetic bile pigment-protein from the phycobiliprotein complex. The chain is C-phycoerythrin alpha chain (cpeA) from Synechocystis sp. (strain PCC 6701).